A 370-amino-acid polypeptide reads, in one-letter code: 2-Hydroxyacid oxidase 1 (370 aa).

The FMN hydroxy acid dehydrogenase domain occupies 1 to 365; sequence MLPRLVCISD…DKTLVRKNPL (365 aa). Tyrosine 26 contributes to the glyoxylate binding site. FMN contacts are provided by residues 79–81, serine 108, and glutamine 130; that span reads ATA. Tyrosine 132 provides a ligand contact to glyoxylate. Threonine 158 lines the FMN pocket. Arginine 167 contacts glyoxylate. N6-succinyllysine is present on lysine 184. Serine 194 and serine 230 each carry phosphoserine. Residues lysine 236 and serine 258 each coordinate FMN. Glyoxylate-binding residues include histidine 260 and arginine 263. Histidine 260 functions as the Proton acceptor in the catalytic mechanism. FMN contacts are provided by residues 291-295 and 314-315; these read DGGVR and GR. Residues 368-370 carry the Microbody targeting signal motif; that stretch reads SKI.

Belongs to the FMN-dependent alpha-hydroxy acid dehydrogenase family. In terms of assembly, homotetramer. FMN is required as a cofactor. In terms of tissue distribution, liver.

It is found in the peroxisome matrix. It catalyses the reaction a (2S)-2-hydroxycarboxylate + O2 = a 2-oxocarboxylate + H2O2. It carries out the reaction glycolate + O2 = glyoxylate + H2O2. The catalysed reaction is glyoxylate + O2 + H2O = oxalate + H2O2 + H(+). The enzyme catalyses 2-hydroxyhexadecanoate + O2 = 2-oxohexadecanoate + H2O2. It catalyses the reaction 2-hydroxyoctanoate + O2 = 2-oxooctanoate + H2O2. It participates in amino-acid biosynthesis; glycine biosynthesis. In terms of biological role, broad substrate specificity (S)-2-hydroxy-acid oxidase that preferentially oxidizes glycolate. The glyoxylate produced by the oxidation of glycolate can then be utilized by alanine-glyoxylate aminotransferase for the peroxisomal synthesis of glycine; this pathway appears to be an important step for the detoxification of glyoxylate which, if allowed to accumulate, may be metabolized to oxalate with formation of kidney stones. Can also catalyze the oxidation glyoxylate, and long chain hydroxyacids such as 2-hydroxyhexadecanoate and 2-hydroxyoctanoate. Active in vitro with the artificial electron acceptor 2,6-dichlorophenolindophenol (DCIP), but O2 is believed to be the physiological electron acceptor, leading to the production of H2O2. The protein is 2-Hydroxyacid oxidase 1 of Mus musculus (Mouse).